Here is a 756-residue protein sequence, read N- to C-terminus: Virulence factor MDV010 (756 aa).

An N-terminal signal peptide occupies residues 1–30 (MPSKSIADHHAGYGVALAIVALLLIHGTAL). The segment at 96-120 (EEHITLSSPRTSTKTTNENGHEKDS) is disordered. Positions 100 to 113 (TLSSPRTSTKTTNE) are enriched in polar residues. Asn-222, Asn-241, Asn-287, Asn-423, Asn-495, Asn-542, Asn-552, Asn-580, Asn-660, Asn-684, Asn-715, and Asn-744 each carry an N-linked (GlcNAc...) asparagine; by host glycan.

It localises to the secreted. In terms of biological role, may play a role in host immune modulation since the protein is secreted and provides an advantage for growth in vivo while it is completely dispensable in cell culture. The protein is Virulence factor MDV010 (MDV010) of Gallid herpesvirus 2 (strain Chicken/Md5/ATCC VR-987) (GaHV-2).